The following is a 580-amino-acid chain: Proline--tRNA ligase (580 aa).

Belongs to the class-II aminoacyl-tRNA synthetase family. ProS type 1 subfamily. In terms of assembly, homodimer.

The protein resides in the cytoplasm. The catalysed reaction is tRNA(Pro) + L-proline + ATP = L-prolyl-tRNA(Pro) + AMP + diphosphate. In terms of biological role, catalyzes the attachment of proline to tRNA(Pro) in a two-step reaction: proline is first activated by ATP to form Pro-AMP and then transferred to the acceptor end of tRNA(Pro). As ProRS can inadvertently accommodate and process non-cognate amino acids such as alanine and cysteine, to avoid such errors it has two additional distinct editing activities against alanine. One activity is designated as 'pretransfer' editing and involves the tRNA(Pro)-independent hydrolysis of activated Ala-AMP. The other activity is designated 'posttransfer' editing and involves deacylation of mischarged Ala-tRNA(Pro). The misacylated Cys-tRNA(Pro) is not edited by ProRS. This chain is Proline--tRNA ligase, found in Albidiferax ferrireducens (strain ATCC BAA-621 / DSM 15236 / T118) (Rhodoferax ferrireducens).